Here is a 176-residue protein sequence, read N- to C-terminus: Inorganic pyrophosphatase (176 aa).

3 residues coordinate substrate: K30, R44, and Y56. Mg(2+) contacts are provided by D66, D71, and D103. Y142 provides a ligand contact to substrate.

It belongs to the PPase family. Homohexamer. Mg(2+) is required as a cofactor.

It is found in the cytoplasm. It catalyses the reaction diphosphate + H2O = 2 phosphate + H(+). Functionally, catalyzes the hydrolysis of inorganic pyrophosphate (PPi) forming two phosphate ions. The sequence is that of Inorganic pyrophosphatase from Vibrio parahaemolyticus serotype O3:K6 (strain RIMD 2210633).